A 208-amino-acid polypeptide reads, in one-letter code: uncharacterized protein (208 aa).

The next 6 helical transmembrane spans lie at 5-25, 41-61, 69-89, 123-143, 150-170, and 176-196; these read VIGILVIIAIISVGFFQKEAW, MLLIAADVFFPIVPFALIAAL, ANGIWITLTGSMLGTILLFFL, VLLGRLIPVIPSLVMNVICGL, VFFFASLIGKIPNIVVVTIAG, and NKLLSISIYGTYILIIMLVIY.

Its subcellular location is the cell membrane. This is an uncharacterized protein from Bacillus subtilis (strain 168).